We begin with the raw amino-acid sequence, 429 residues long: UDP-N-acetylglucosamine 1-carboxyvinyltransferase 2 (429 aa).

Position 22 to 23 (22 to 23) interacts with phosphoenolpyruvate; it reads KN. Position 93 (Arg93) interacts with UDP-N-acetyl-alpha-D-glucosamine. Cys117 acts as the Proton donor in catalysis. At Cys117 the chain carries 2-(S-cysteinyl)pyruvic acid O-phosphothioketal. UDP-N-acetyl-alpha-D-glucosamine-binding positions include 122 to 126, Asp305, and Ile327; that span reads RPIDQ.

The protein belongs to the EPSP synthase family. MurA subfamily.

The protein localises to the cytoplasm. The catalysed reaction is phosphoenolpyruvate + UDP-N-acetyl-alpha-D-glucosamine = UDP-N-acetyl-3-O-(1-carboxyvinyl)-alpha-D-glucosamine + phosphate. It functions in the pathway cell wall biogenesis; peptidoglycan biosynthesis. Its function is as follows. Cell wall formation. Adds enolpyruvyl to UDP-N-acetylglucosamine. The protein is UDP-N-acetylglucosamine 1-carboxyvinyltransferase 2 of Bacillus anthracis.